A 938-amino-acid chain; its full sequence is Isoleucine--tRNA ligase (938 aa).

Residues 58 to 68 carry the 'HIGH' region motif; that stretch reads PYANGSIHIGH. K183 is modified (N6-acetyllysine). Residue E561 participates in L-isoleucyl-5'-AMP binding. A 'KMSKS' region motif is present at residues 602–606; that stretch reads KMSKS. Residue K605 coordinates ATP. Zn(2+) is bound by residues C901, C904, C921, and C924.

Belongs to the class-I aminoacyl-tRNA synthetase family. IleS type 1 subfamily. Monomer. Requires Zn(2+) as cofactor.

The protein localises to the cytoplasm. It catalyses the reaction tRNA(Ile) + L-isoleucine + ATP = L-isoleucyl-tRNA(Ile) + AMP + diphosphate. Catalyzes the attachment of isoleucine to tRNA(Ile). As IleRS can inadvertently accommodate and process structurally similar amino acids such as valine, to avoid such errors it has two additional distinct tRNA(Ile)-dependent editing activities. One activity is designated as 'pretransfer' editing and involves the hydrolysis of activated Val-AMP. The other activity is designated 'posttransfer' editing and involves deacylation of mischarged Val-tRNA(Ile). The sequence is that of Isoleucine--tRNA ligase from Escherichia fergusonii (strain ATCC 35469 / DSM 13698 / CCUG 18766 / IAM 14443 / JCM 21226 / LMG 7866 / NBRC 102419 / NCTC 12128 / CDC 0568-73).